The chain runs to 249 residues: uncharacterized protein (249 aa).

This sequence belongs to the AIM2 family.

The protein resides in the cytoplasm. The protein localises to the nucleus. This is an uncharacterized protein from Schizosaccharomyces pombe (strain 972 / ATCC 24843) (Fission yeast).